Here is a 123-residue protein sequence, read N- to C-terminus: MPKKSGSAAGRNVRIADQIQRDLAELIQREIKNPAMGLVTLQSVTLTPDYAHAKIYFTVLGAEPEVAGAILNEKAGYLHSLLFKRLHIHTVPTLHFHFDGSVERGIEMSRLIDEANATRAKDD.

The protein belongs to the RbfA family. As to quaternary structure, monomer. Binds 30S ribosomal subunits, but not 50S ribosomal subunits or 70S ribosomes.

The protein localises to the cytoplasm. In terms of biological role, one of several proteins that assist in the late maturation steps of the functional core of the 30S ribosomal subunit. Associates with free 30S ribosomal subunits (but not with 30S subunits that are part of 70S ribosomes or polysomes). Required for efficient processing of 16S rRNA. May interact with the 5'-terminal helix region of 16S rRNA. The sequence is that of Ribosome-binding factor A from Ralstonia pickettii (strain 12J).